Here is a 1087-residue protein sequence, read N- to C-terminus: A-kinase anchor protein 9 (1087 aa).

Residues Glu-5–Gln-461 adopt a coiled-coil conformation. The PKA-RII subunit binding domain stretch occupies residues Ser-559 to Leu-572. The stretch at Met-614 to Gln-773 forms a coiled coil. Residues Val-667–Gly-685 show a composition bias toward basic and acidic residues. The disordered stretch occupies residues Val-667 to Glu-691.

In terms of assembly, interacts with the regulatory region of protein kinase N (PKN), protein phosphatase 2A (PP2A), protein phosphatase 1 (PP1) and the immature non-phosphorylated form of PKC epsilon. Interacts with CIP4 and FNBP1. Interacts with chloride intracellular channel proteins CLIC1, CLIC4 and CLIC5. CSNK1D binding promotes its centrosomal subcellular location. Interacts with GM130/GOLGA2; leading to recruitment to the Golgi apparatus. Interacts with KCNQ1; targets protein kinase A (PKA) catalytic and regulatory subunits and protein phosphatase 1 (PP1), to the heterodimer KCNQ1-KCNE1. Interacts with PDE4DIP; this interaction stabilizes both proteins. In complex with PDE4DIP, recruits CAMSAP2 to the Golgi apparatus. Forms a pericentrosomal complex with CDK5RAP2, EB1/MAPRE1 and PDE4DIP; within this complex, MAPRE1 binding to CDK5RAP2 may be mediated by PDE4DIP. The interaction with PDE4DIP is isoform-specific. Interacts with MAPRE1 and MAPRE3. Interacts (via C-terminus) with CAMSAP2; this interaction is much stronger in the presence of PDE4DIP. Interacts with CAMSAP3. Interacts (via C-terminus) with the gamma-tubulin ring complex (gamma-TuRC), composed of gamma-tubulin, TUBGCP2, TUBGCP3, TUBGCP4, TUBGCP5 and TUBGCP6. In terms of tissue distribution, highly expressed in gastric parietal cells.

It is found in the golgi apparatus. The protein localises to the cytoplasm. It localises to the cytoskeleton. Its subcellular location is the microtubule organizing center. The protein resides in the centrosome. Scaffolding protein that assembles several protein kinases and phosphatases on the centrosome and Golgi apparatus. Required to maintain the integrity of the Golgi apparatus. Required for microtubule nucleation at the cis-side of the Golgi apparatus. Required for association of the centrosomes with the poles of the bipolar mitotic spindle during metaphase. In complex with PDE4DIP, recruits CAMSAP2 to the Golgi apparatus and tethers non-centrosomal minus-end microtubules to the Golgi, an important step for polarized cell movement. In complex with PDE4DIP, EB1/MAPRE1 and CDK5RAP2, contributes to microtubules nucleation and extension also from the centrosome to the cell periphery. The interaction with PDE4DIP is isoform-specific. The sequence is that of A-kinase anchor protein 9 (AKAP9) from Oryctolagus cuniculus (Rabbit).